Here is a 1143-residue protein sequence, read N- to C-terminus: Probable ATP-dependent RNA helicase DHX34 (1143 aa).

Disordered stretches follow at residues 1–24 and 75–94; these read MPPP…EEEA and TSRK…PALA. Over residues 76–85 the composition is skewed to basic and acidic residues; that stretch reads SRKEEKDPGQ. One can recognise a Helicase ATP-binding domain in the interval 172–332; it reads LQTLKEHQVV…FSNAPVVQVP (161 aa). 185–192 contacts ATP; it reads GDTGCGKS. The DEAH box signature appears at 279-282; sequence DEVH. The Helicase C-terminal domain occupies 368–536; that stretch reads SIDHKYPPEE…SLVLQMKSMS (169 aa). Positions 701 to 955 are negatively regulates interaction with UPF1; it reads QAAQVGDSYS…LRARWESALD (255 aa). The interval 724-766 is disordered; the sequence is LKRQHEEGAGRRRKVLRLQEEQDGGSSDEDRAGPAPPGASDGV. Phosphoserine is present on residues S749 and S750. Positions 810–1143 are required for phosphorylation of UPF1. Not required for interaction with UPF1; that stretch reads PQLAVPDAFN…EVLRHRKQHV (334 aa). Residues 957-1143 form a required for the interaction with SMG1 and subsequent phosphorylation of UPF1 region; the sequence is QLAHQAQQQL…EVLRHRKQHV (187 aa).

It belongs to the DEAD box helicase family. DEAH subfamily. As to quaternary structure, forms a complex with RUVBL1 and RUVBL2. Part of a complex composed of SMG1, DHX34 and UPF1; within the complex DHX34 acts as a scaffolding protein to facilitate SMG1 phosphorylation of UPF1. Interacts with UPF1, MOV10, EIF4A3, XRN2, SMG6, SMG7, SMG9, UPF3A, UPF3B, CASC3/MLN51, XRN1, DIS3 and DCP1A; the interactions are RNA-independent. Interacts with NCBP1/CPB80; the interaction is RNA-dependent. Interacts (via C-terminus) with SMG1; the interaction is RNA-independent. Expressed in whole blood, testis and spleen. Also expressed in the brain.

The enzyme catalyses ATP + H2O = ADP + phosphate + H(+). Probable ATP-binding RNA helicase required for nonsense-mediated decay (NMD) degradation of mRNA transcripts containing premature stop codons. Promotes the phosphorylation of UPF1 along with its interaction with key NMD pathway proteins UPF2 and EIF4A3. Interaction with the RUVBL1-RUVBL2 complex results in loss of nucleotide binding ability and ATP hydrolysis of the complex. Negatively regulates the nucleotide binding ability and ATP hydrolysis of the RUVBL1-RUVBL2 complex via induction of N-terminus conformation changes of the RUVBL2 subunits. The protein is Probable ATP-dependent RNA helicase DHX34 of Homo sapiens (Human).